A 972-amino-acid polypeptide reads, in one-letter code: Isoleucine--tRNA ligase (972 aa).

Residues 63–73 (PYANGNIHIGH) carry the 'HIGH' region motif. Glu-603 lines the L-isoleucyl-5'-AMP pocket. A 'KMSKS' region motif is present at residues 644–648 (KMSKS). Lys-647 contacts ATP.

This sequence belongs to the class-I aminoacyl-tRNA synthetase family. IleS type 1 subfamily. Monomer.

The protein localises to the cytoplasm. The catalysed reaction is tRNA(Ile) + L-isoleucine + ATP = L-isoleucyl-tRNA(Ile) + AMP + diphosphate. In terms of biological role, catalyzes the attachment of isoleucine to tRNA(Ile). As IleRS can inadvertently accommodate and process structurally similar amino acids such as valine, to avoid such errors it has two additional distinct tRNA(Ile)-dependent editing activities. One activity is designated as 'pretransfer' editing and involves the hydrolysis of activated Val-AMP. The other activity is designated 'posttransfer' editing and involves deacylation of mischarged Val-tRNA(Ile). This chain is Isoleucine--tRNA ligase, found in Brucella abortus (strain 2308).